The chain runs to 125 residues: Major intrinsically disordered NOTCH2-binding receptor 1-like (125 aa).

Asn37 carries N-linked (GlcNAc...) asparagine glycosylation. Residues 100-120 (FAFITLFVCAVVIIITVPIVV) traverse the membrane as a helical segment.

This sequence belongs to the MINAR family. Interacts with NOTCH2. Highly expressed in the auditory hair cells.

It localises to the lysosome membrane. It is found in the endoplasmic reticulum membrane. Its function is as follows. Binds cholesterol and may regulate the distribution and homeostasis of cholesterol in hair cells. May play a role in angiogenesis. The polypeptide is Major intrinsically disordered NOTCH2-binding receptor 1-like (Danio rerio (Zebrafish)).